A 446-amino-acid chain; its full sequence is Argininosuccinate lyase (446 aa).

Belongs to the lyase 1 family. Argininosuccinate lyase subfamily.

Its subcellular location is the cytoplasm. It carries out the reaction 2-(N(omega)-L-arginino)succinate = fumarate + L-arginine. It functions in the pathway amino-acid biosynthesis; L-arginine biosynthesis; L-arginine from L-ornithine and carbamoyl phosphate: step 3/3. The sequence is that of Argininosuccinate lyase from Parabacteroides distasonis (strain ATCC 8503 / DSM 20701 / CIP 104284 / JCM 5825 / NCTC 11152).